A 284-amino-acid polypeptide reads, in one-letter code: MAIRGPEASSFFPLTLVFSVGFFCARFFLDRLVYKPLAAYCFSSKASKLMNDEVRQAKIVKFSESIWKLTYYGSVQAWVLLIIKQEPWSLDTMQYFEGWPNQYMTSSLMLFYMCQCGFYIYSIFALVAWETRRKDFAVMMSHHVVTSILIGYAYLTGFFRIGTIILALHDASDVFLETAKLCKYTEKELGASLFFGLFALSWLLLRLIYFPFWIIKTSSYQSIISLRKLEKFPTTLYYIFNTMLLTLLVFHIYWWKLICLMIMKQLNNKGQVGEDVRSDSEDEE.

A run of 6 helical transmembrane segments spans residues 9 to 29 (SSFFPLTLVFSVGFFCARFFL), 69 to 89 (LTYYGSVQAWVLLIIKQEPWS), 108 to 128 (LMLFYMCQCGFYIYSIFALVA), 148 to 168 (ILIGYAYLTGFFRIGTIILAL), 195 to 215 (FGLFALSWLLLRLIYFPFWII), and 243 to 263 (MLLTLLVFHIYWWKLICLMIM). The TLC domain maps to 60-267 (VKFSESIWKL…ICLMIMKQLN (208 aa)).

It is found in the endoplasmic reticulum membrane. Mediates resistance to sphinganine-analog mycotoxins (SAMs) by restoring the sphingolipid biosynthesis. Could salvage the transport of GPI-anchored proteins from the endoplasmic reticulum to the Golgi apparatus in ceramides-depleted cells after SAM exposure. This Oryza sativa subsp. japonica (Rice) protein is ASC1-like protein 3.